Reading from the N-terminus, the 166-residue chain is ATP synthase subunit b (166 aa).

The chain crosses the membrane as a helical span at residues 15–37 (TLYYLLIFAALLLLVKHFAWGPV).

It belongs to the ATPase B chain family. F-type ATPases have 2 components, F(1) - the catalytic core - and F(0) - the membrane proton channel. F(1) has five subunits: alpha(3), beta(3), gamma(1), delta(1), epsilon(1). F(0) has three main subunits: a(1), b(2) and c(10-14). The alpha and beta chains form an alternating ring which encloses part of the gamma chain. F(1) is attached to F(0) by a central stalk formed by the gamma and epsilon chains, while a peripheral stalk is formed by the delta and b chains.

Its subcellular location is the cell membrane. In terms of biological role, f(1)F(0) ATP synthase produces ATP from ADP in the presence of a proton or sodium gradient. F-type ATPases consist of two structural domains, F(1) containing the extramembraneous catalytic core and F(0) containing the membrane proton channel, linked together by a central stalk and a peripheral stalk. During catalysis, ATP synthesis in the catalytic domain of F(1) is coupled via a rotary mechanism of the central stalk subunits to proton translocation. Component of the F(0) channel, it forms part of the peripheral stalk, linking F(1) to F(0). This Lactobacillus gasseri (strain ATCC 33323 / DSM 20243 / BCRC 14619 / CIP 102991 / JCM 1131 / KCTC 3163 / NCIMB 11718 / NCTC 13722 / AM63) protein is ATP synthase subunit b.